The primary structure comprises 222 residues: Collectrin (222 aa).

The signal sequence occupies residues 1–14 (MLWALFFLVTTIHA). Residues 15 to 141 (ELCRPDAENA…LAPPMDPSVP (127 aa)) lie on the Extracellular side of the membrane. The 202-residue stretch at 21–222 (AENAFKVRLS…LTEDERLTPL (202 aa)) folds into the Collectrin-like domain. Asparagine 76 and asparagine 93 each carry an N-linked (GlcNAc...) asparagine glycan. Residues 142-162 (VWIIVFGVIFCIVTVAIALLV) traverse the membrane as a helical segment. The Cytoplasmic portion of the chain corresponds to 163–222 (LSGIRQRRRNKKGPPGVEDAEDKCENIITIENGIPCDPLDMKGGHINDGFLTEDERLTPL). A phosphothreonine mark is found at threonine 214 and threonine 220.

Belongs to the CLTRN family. As to quaternary structure, monomer. Homodimer; dimerization prevents CLTRN cleavage by BACE2. Interacts with SLC6A18; this interaction regulates the trafficking of SLC6A18 to the cell membrane and its amino acid transporter activity. Interacts with SLC6A19; this interaction regulates the trafficking of SLC6A19 to the cell membrane and its amino acid transporter activity. Interacts with SNAPIN. Glycosylated. Glycosylation is required for plasma membrane localization and for its cleavage by BACE2. In terms of processing, proteolytically processed in pancreatic beta cells by BACE2 leading to the generation and extracellular release of soluble CLTRN, and a corresponding cell-associated C-terminal fragment which is later cleaved by gamma-secretase. This shedding process inactivates CLTRN. Three cleavage sites have been identified for BACE2, two clustered sites after Phe-116 and Leu-118 and a more membrane proximal site at Phe-125; the preferred BACE2 cleavage site seems to be between Phe-125 and Leu-126, Phe-116 and Leu-118 act as alternative sites. In terms of tissue distribution, kidney; collecting ducts. Pancreas; beta cells of islets.

It is found in the cell membrane. Functionally, plays an important role in amino acid transport by acting as binding partner of amino acid transporters SLC6A18 and SLC6A19, regulating their trafficking on the cell surface and their activity. May also play a role in trafficking of amino acid transporters SLC3A1 and SLC7A9 to the renal cortical cell membrane. Regulator of SNARE complex function. Stimulator of beta cell replication. This Rattus norvegicus (Rat) protein is Collectrin.